Reading from the N-terminus, the 479-residue chain is Auxin transporter-like protein 1 (479 aa).

Residues 1–58 (MLSEKQGEETMMSSLNETIELNEEREEEKGASPGSGFKNFLWHGGSVYDAWFSCASNQ) lie on the Cytoplasmic side of the membrane. The helical transmembrane segment at 59–76 (VAQVLLTLPYSFSQLGMI) threads the bilayer. At 77-78 (SG) the chain is on the extracellular side. A helical membrane pass occupies residues 79–99 (IIFQVFYGLMGSWTAYLISIL). The Cytoplasmic segment spans residues 100–134 (YVEYRSRKEKENVSFKNHVIQWFEVLEGLLGPYWK). The helical transmembrane segment at 135–155 (AIGLAFNCTFLLFGSVIQLIA) threads the bilayer. At 156–171 (CASNIYYINDHLDKRT) the chain is on the extracellular side. Residues 172 to 192 (WTYIFGACCATTVFIPSFHNY) traverse the membrane as a helical segment. Topologically, residues 193–195 (RIW) are cytoplasmic. A helical membrane pass occupies residues 196 to 216 (SFLGLGMTTYTAWYMTIAAIV). At 217–231 (HGQVENVVHSGPKKM) the chain is on the extracellular side. The helical transmembrane segment at 232-252 (VWYFTGATNILYTFGGHAVTV) threads the bilayer. Topologically, residues 253-265 (EIMHAMWKPQKFK) are cytoplasmic. The helical transmembrane segment at 266-286 (AIYFFATLYVFTLTLPSAIAV) threads the bilayer. The Extracellular portion of the chain corresponds to 287–313 (YWAFGDQLLDHSNAFSLLPRNAWRDAG). The helical transmembrane segment at 314–334 (VILMLIHQFITFGFACTPLYF) threads the bilayer. At 335 to 355 (VWEKVIGMHDTKSIFLRALAR) the chain is on the cytoplasmic side. Residues 356–376 (LPVVIPIWFLAIIFPFFGPIN) form a helical membrane-spanning segment. Position 377 (Ser377) is a topological domain, extracellular. A helical transmembrane segment spans residues 378-398 (AVGALLVSFTVYVIPASAHML). Topologically, residues 399–421 (TYRSASARQNAAEKLPKVIPSWT) are cytoplasmic. The helical transmembrane segment at 422–442 (LMYVINAFVVIWVTIVGFGFG) threads the bilayer. Topologically, residues 443-479 (GWASMTNFIKQVDTFGLFAKCYQCPPKLPASNHTMHH) are extracellular. A glycan (N-linked (GlcNAc...) asparagine) is linked at Asn474.

It belongs to the amino acid/polyamine transporter 2 family. Amino acid/auxin permease (AAAP) (TC 2.A.18.1) subfamily. Shoots and roots of nodulating plants. Higher levels in roots, flowers and stems, lower in nodules, leaves, petioles and shoot apices.

The protein localises to the cell membrane. In terms of biological role, carrier protein involved in proton-driven auxin influx. Mediates the formation of auxin gradient from developing leaves (site of auxin biosynthesis) to tips by contributing to the loading of auxin in vascular tissues and facilitating acropetal (base to tip) auxin transport within inner tissues of the root apex, and basipetal (tip to base) auxin transport within outer tissues of the root apex. May be involved in lateral roots and nodules formation. This Medicago truncatula (Barrel medic) protein is Auxin transporter-like protein 1 (LAX1).